Here is a 573-residue protein sequence, read N- to C-terminus: Squalene monooxygenase (573 aa).

Over 1 to 19 (MWTFLGIATFTYFYKKCGD) the chain is Cytoplasmic. An interaction with MARCHF6 region spans residues 1–99 (MWTFLGIATF…EQLESKRRRK (99 aa)). Residues 20–40 (VTLANKELLLCVLVFLSLGLV) lie within the membrane without spanning it. Residues 41–573 (LSYRCRHRNG…IYSEMKYLVH (533 aa)) lie on the Cytoplasmic side of the membrane. Positions 61-72 (QFAAFSDILSAL) are required for degradation in response to high membrane cholesterol levels. A sufficient for catalytic activity region spans residues 100-573 (EVNLSETTLT…IYSEMKYLVH (474 aa)). FAD-binding positions include 132–133 (VL), 152–153 (ER), Arg160, Arg233, Val249, Asp407, and Met420. The hydrophobic; mediates interaction with membranes stretch occupies residues 515-573 (PLLLIRHFFSVAVYATYFCFKSEPWATKPRALFSSGAILYKACSIIFPLIYSEMKYLVH).

The protein belongs to the squalene monooxygenase family. In terms of assembly, interacts (via N-terminal domain) with MARCHF6. Interacts with SMIM22; this interaction modulates lipid droplet formation. The cofactor is FAD. Ubiquitinated by MARCHF6 in response to high cholesterol levels in intracellular membranes, leading to proteasomal degradation. Detected in lever (at protein level).

It localises to the microsome membrane. It is found in the endoplasmic reticulum membrane. It catalyses the reaction squalene + reduced [NADPH--hemoprotein reductase] + O2 = (S)-2,3-epoxysqualene + oxidized [NADPH--hemoprotein reductase] + H2O + H(+). The protein operates within terpene metabolism; lanosterol biosynthesis; lanosterol from farnesyl diphosphate: step 2/3. Inhibited by NB-598 ((E)N-ethyl-N-(6,6-dimethyl-2-hepten-4-ynyl)-3-[(3,3'-bi-thiophen-5-yl)methoxy]benzene-methanamine). Contrary to fungal enzymes, the mammalian enzyme is only slightly inhibited by terbinafine. Functionally, catalyzes the stereospecific oxidation of squalene to (S)-2,3-epoxysqualene, and is considered to be a rate-limiting enzyme in steroid biosynthesis. The sequence is that of Squalene monooxygenase (Sqle) from Rattus norvegicus (Rat).